Here is a 429-residue protein sequence, read N- to C-terminus: Glutamate-1-semialdehyde 2,1-aminomutase (429 aa).

Residue Lys-265 is modified to N6-(pyridoxal phosphate)lysine.

This sequence belongs to the class-III pyridoxal-phosphate-dependent aminotransferase family. HemL subfamily. As to quaternary structure, homodimer. The cofactor is pyridoxal 5'-phosphate.

It localises to the cytoplasm. The enzyme catalyses (S)-4-amino-5-oxopentanoate = 5-aminolevulinate. It functions in the pathway porphyrin-containing compound metabolism; protoporphyrin-IX biosynthesis; 5-aminolevulinate from L-glutamyl-tRNA(Glu): step 2/2. The protein is Glutamate-1-semialdehyde 2,1-aminomutase of Ectopseudomonas mendocina (strain ymp) (Pseudomonas mendocina).